Consider the following 354-residue polypeptide: 3-isopropylmalate dehydrogenase (354 aa).

Residue 74–87 (GPKWDDLPPEKRPE) participates in NAD(+) binding. Residues Arg95, Arg105, Arg134, and Asp219 each coordinate substrate. Positions 219, 243, and 247 each coordinate Mg(2+). 275-287 (GSAPDIAGKNIAN) provides a ligand contact to NAD(+).

The protein belongs to the isocitrate and isopropylmalate dehydrogenases family. LeuB type 1 subfamily. Homodimer. Mg(2+) is required as a cofactor. Mn(2+) serves as cofactor.

Its subcellular location is the cytoplasm. The catalysed reaction is (2R,3S)-3-isopropylmalate + NAD(+) = 4-methyl-2-oxopentanoate + CO2 + NADH. Its pathway is amino-acid biosynthesis; L-leucine biosynthesis; L-leucine from 3-methyl-2-oxobutanoate: step 3/4. Its function is as follows. Catalyzes the oxidation of 3-carboxy-2-hydroxy-4-methylpentanoate (3-isopropylmalate) to 3-carboxy-4-methyl-2-oxopentanoate. The product decarboxylates to 4-methyl-2 oxopentanoate. The chain is 3-isopropylmalate dehydrogenase (leuB) from Thermotoga maritima (strain ATCC 43589 / DSM 3109 / JCM 10099 / NBRC 100826 / MSB8).